A 356-amino-acid polypeptide reads, in one-letter code: Phosphoserine aminotransferase (356 aa).

Arginine 41 is a binding site for L-glutamate. Pyridoxal 5'-phosphate is bound by residues 76–77, tryptophan 102, threonine 150, aspartate 169, and glutamine 192; that span reads AS. Lysine 193 carries the post-translational modification N6-(pyridoxal phosphate)lysine. Pyridoxal 5'-phosphate is bound at residue 234–235; the sequence is NT.

It belongs to the class-V pyridoxal-phosphate-dependent aminotransferase family. SerC subfamily. As to quaternary structure, homodimer. Requires pyridoxal 5'-phosphate as cofactor.

It is found in the cytoplasm. The enzyme catalyses O-phospho-L-serine + 2-oxoglutarate = 3-phosphooxypyruvate + L-glutamate. The catalysed reaction is 4-(phosphooxy)-L-threonine + 2-oxoglutarate = (R)-3-hydroxy-2-oxo-4-phosphooxybutanoate + L-glutamate. Its pathway is amino-acid biosynthesis; L-serine biosynthesis; L-serine from 3-phospho-D-glycerate: step 2/3. The protein operates within cofactor biosynthesis; pyridoxine 5'-phosphate biosynthesis; pyridoxine 5'-phosphate from D-erythrose 4-phosphate: step 3/5. Catalyzes the reversible conversion of 3-phosphohydroxypyruvate to phosphoserine and of 3-hydroxy-2-oxo-4-phosphonooxybutanoate to phosphohydroxythreonine. The polypeptide is Phosphoserine aminotransferase (Flavobacterium psychrophilum (strain ATCC 49511 / DSM 21280 / CIP 103535 / JIP02/86)).